A 403-amino-acid chain; its full sequence is Tripartite motif-containing protein 59 (403 aa).

Residues 10–60 (CPICYSIFEDPRVLPCSHTFCRNCLENILQASGNFYIWRPLRIPLKCPNCR) form an RING-type zinc finger. Residues 92-134 (PDIVTCPEHYRQPLNVYCLLDKKLVCGHCLTIGQHHGHPIDDL) form a B box-type zinc finger. 4 residues coordinate Zn(2+): Cys-97, His-100, Cys-120, and His-126. A coiled-coil region spans residues 163 to 246 (LIEKLKEQKS…ALTISLQEES (84 aa)). A helical transmembrane segment spans residues 329–349 (ILNIVVVTLISVILMSILFFN).

Belongs to the TRIM/RBCC family. In terms of assembly, interacts with ECSIT.

Its subcellular location is the endoplasmic reticulum membrane. The enzyme catalyses S-ubiquitinyl-[E2 ubiquitin-conjugating enzyme]-L-cysteine + [acceptor protein]-L-lysine = [E2 ubiquitin-conjugating enzyme]-L-cysteine + N(6)-ubiquitinyl-[acceptor protein]-L-lysine.. It functions in the pathway protein modification; protein ubiquitination. Its function is as follows. E3 ubiquitin ligase involved in different processes such as development and immune response. Serves as a negative regulator for innate immune signaling pathways by suppressing RLR-induced activation of IRF3/7 and NF-kappa-B via interaction with adapter ECSIT. Regulates autophagy through modulating both the transcription and the ubiquitination of BECN1. On the one hand, regulates the transcription of BECN1 through negatively modulating the NF-kappa-B pathway. On the other hand, regulates TRAF6-mediated 'Lys-63'-linked ubiquitination of BECN1, thus affecting the formation of the BECN1-PIK3C3 complex. In addition, mediates 'Lys-48'-linked ubiquitination of TRAF6 and thereby promotes TRAF6 proteasomal degradation. Also acts as a critical regulator for early embryo development from blastocyst stage to gastrula through modulating F-actin assembly and WASH1 'Lys-63'-linked ubiquitination. The polypeptide is Tripartite motif-containing protein 59 (TRIM59) (Homo sapiens (Human)).